Reading from the N-terminus, the 124-residue chain is Small ribosomal subunit protein bS6 (124 aa).

Residues proline 99–alanine 124 form a disordered region. A compositionally biased stretch (low complexity) spans proline 111–alanine 124.

It belongs to the bacterial ribosomal protein bS6 family.

Functionally, binds together with bS18 to 16S ribosomal RNA. This is Small ribosomal subunit protein bS6 from Prochlorococcus marinus (strain MIT 9313).